The chain runs to 340 residues: Phosphoribosylformylglycinamidine cyclo-ligase (340 aa).

This sequence belongs to the AIR synthase family.

The protein resides in the cytoplasm. The enzyme catalyses 2-formamido-N(1)-(5-O-phospho-beta-D-ribosyl)acetamidine + ATP = 5-amino-1-(5-phospho-beta-D-ribosyl)imidazole + ADP + phosphate + H(+). It participates in purine metabolism; IMP biosynthesis via de novo pathway; 5-amino-1-(5-phospho-D-ribosyl)imidazole from N(2)-formyl-N(1)-(5-phospho-D-ribosyl)glycinamide: step 2/2. The protein is Phosphoribosylformylglycinamidine cyclo-ligase of Streptococcus agalactiae serotype V (strain ATCC BAA-611 / 2603 V/R).